Here is a 236-residue protein sequence, read N- to C-terminus: Leucyl/phenylalanyl-tRNA--protein transferase (236 aa).

The protein belongs to the L/F-transferase family.

It localises to the cytoplasm. It carries out the reaction N-terminal L-lysyl-[protein] + L-leucyl-tRNA(Leu) = N-terminal L-leucyl-L-lysyl-[protein] + tRNA(Leu) + H(+). The enzyme catalyses N-terminal L-arginyl-[protein] + L-leucyl-tRNA(Leu) = N-terminal L-leucyl-L-arginyl-[protein] + tRNA(Leu) + H(+). The catalysed reaction is L-phenylalanyl-tRNA(Phe) + an N-terminal L-alpha-aminoacyl-[protein] = an N-terminal L-phenylalanyl-L-alpha-aminoacyl-[protein] + tRNA(Phe). Functionally, functions in the N-end rule pathway of protein degradation where it conjugates Leu, Phe and, less efficiently, Met from aminoacyl-tRNAs to the N-termini of proteins containing an N-terminal arginine or lysine. This chain is Leucyl/phenylalanyl-tRNA--protein transferase, found in Shewanella pealeana (strain ATCC 700345 / ANG-SQ1).